We begin with the raw amino-acid sequence, 199 residues long: Putative 3-methyladenine DNA glycosylase (199 aa).

This sequence belongs to the DNA glycosylase MPG family.

In Chlorobium phaeobacteroides (strain BS1), this protein is Putative 3-methyladenine DNA glycosylase.